An 855-amino-acid polypeptide reads, in one-letter code: DNA mismatch repair protein MutS (855 aa).

G613 to S620 lines the ATP pocket. A disordered region spans residues T796 to Q816.

It belongs to the DNA mismatch repair MutS family.

This protein is involved in the repair of mismatches in DNA. It is possible that it carries out the mismatch recognition step. This protein has a weak ATPase activity. The protein is DNA mismatch repair protein MutS of Pseudomonas aeruginosa (strain ATCC 15692 / DSM 22644 / CIP 104116 / JCM 14847 / LMG 12228 / 1C / PRS 101 / PAO1).